A 139-amino-acid polypeptide reads, in one-letter code: Small ribosomal subunit protein bS6 (139 aa).

Belongs to the bacterial ribosomal protein bS6 family.

Functionally, binds together with bS18 to 16S ribosomal RNA. This chain is Small ribosomal subunit protein bS6, found in Borreliella afzelii (strain PKo) (Borrelia afzelii).